Here is a 331-residue protein sequence, read N- to C-terminus: UPF0324 membrane protein YdhF (331 aa).

Transmembrane regions (helical) follow at residues 2-20 (SILP…SYLL), 24-46 (IFHS…NLYF), 82-104 (LGFS…VLFM), 114-136 (VSAL…VEPV), 148-170 (IAMV…TWMF), 204-226 (TLAT…YFGF), 247-269 (SFLP…IHFV), and 308-330 (LIYG…SLLI).

It belongs to the UPF0324 family.

The protein localises to the cell membrane. This Lactococcus lactis subsp. lactis (strain IL1403) (Streptococcus lactis) protein is UPF0324 membrane protein YdhF (ydhF).